Consider the following 106-residue polypeptide: Venom family 8-like peptide Pr8a (106 aa).

Residues Met-1–Ser-17 form the signal peptide.

In terms of processing, contains 2 disulfide bonds. As to expression, expressed by the venom gland (anterior main gland) (at protein level).

The protein localises to the secreted. In Platymeris rhadamanthus (Red spot assassin bug), this protein is Venom family 8-like peptide Pr8a.